The following is a 106-amino-acid chain: Iron-sulfur cluster assembly protein CyaY (106 aa).

The protein belongs to the frataxin family.

Its function is as follows. Involved in iron-sulfur (Fe-S) cluster assembly. May act as a regulator of Fe-S biogenesis. The protein is Iron-sulfur cluster assembly protein CyaY of Salmonella arizonae (strain ATCC BAA-731 / CDC346-86 / RSK2980).